Consider the following 254-residue polypeptide: Proteasome subunit alpha (254 aa).

Residues 231–254 form a disordered region; sequence ESGAASADGEAETEAETDSGSDEE. The span at 239–254 shows a compositional bias: acidic residues; it reads GEAETEAETDSGSDEE.

This sequence belongs to the peptidase T1A family. In terms of assembly, the 20S proteasome core is composed of 14 alpha and 14 beta subunits that assemble into four stacked heptameric rings, resulting in a barrel-shaped structure. The two inner rings, each composed of seven catalytic beta subunits, are sandwiched by two outer rings, each composed of seven alpha subunits. The catalytic chamber with the active sites is on the inside of the barrel. Has probably a gated structure, the ends of the cylinder being occluded by the N-termini of the alpha-subunits. Is likely capped by the proteasome-associated ATPase, ARC. The N-terminus is blocked.

Its subcellular location is the cytoplasm. It participates in protein degradation; proteasomal Pup-dependent pathway. With respect to regulation, the formation of the proteasomal ATPase ARC-20S proteasome complex, likely via the docking of the C-termini of ARC into the intersubunit pockets in the alpha-rings, may trigger opening of the gate for substrate entry. Interconversion between the open-gate and close-gate conformations leads to a dynamic regulation of the 20S proteasome proteolysis activity. Peptidolytic activity is completely inhibited by lactacystin, and to a lesser extent, by N-acetyl-Leu-Leu-norleucinal (Ac-LLnL) and benzoyloxycarbonyl-Leu-Leu-Leu-vinylsulfone (Z-LLL-VS) in vitro. Its function is as follows. Component of the proteasome core, a large protease complex with broad specificity involved in protein degradation. The S.coelicolor proteasome is able to cleave oligopeptides after hydrophobic residues, but not after basic or acidic residues, thus displaying chymotrypsin-like activity but not trypsin-like activity. This Streptomyces coelicolor (strain ATCC BAA-471 / A3(2) / M145) protein is Proteasome subunit alpha.